We begin with the raw amino-acid sequence, 237 residues long: Small ribosomal subunit protein eS4 (237 aa).

An S4 RNA-binding domain is found at 37–99; that stretch reads VPLLIVLRDV…REEYYRIFPD (63 aa).

This sequence belongs to the eukaryotic ribosomal protein eS4 family.

The protein is Small ribosomal subunit protein eS4 of Natronomonas pharaonis (strain ATCC 35678 / DSM 2160 / CIP 103997 / JCM 8858 / NBRC 14720 / NCIMB 2260 / Gabara) (Halobacterium pharaonis).